Reading from the N-terminus, the 327-residue chain is Sideroflexin-2 (327 aa).

5 consecutive transmembrane segments (helical) span residues 99–119 (GMLI…VVLW), 143–163 (VTQL…AAIG), 175–195 (LFQR…NIPL), 228–248 (EVVV…PLIM), and 267–287 (FQTL…CALF).

It belongs to the sideroflexin family.

It is found in the mitochondrion membrane. It catalyses the reaction L-serine(in) = L-serine(out). Its function is as follows. Mitochondrial amino-acid transporter that mediates transport of serine into mitochondria. This chain is Sideroflexin-2, found in Drosophila melanogaster (Fruit fly).